A 113-amino-acid chain; its full sequence is MNTVRVTFLLVFVLAVSLGQADEDGNRMEKRQKKTEAENLLLPKLEELDAKLWEEDSVESRNSRQKRCNGKDVPCDPDPAKNRRCCSGLECLKPYLHGIWYQDYYCYVEKSGR.

The first 21 residues, 1–21, serve as a signal peptide directing secretion; the sequence is MNTVRVTFLLVFVLAVSLGQA. A propeptide spanning residues 22–67 is cleaved from the precursor; it reads DEDGNRMEKRQKKTEAENLLLPKLEELDAKLWEEDSVESRNSRQKR. Cystine bridges form between C68–C86, C75–C91, and C85–C106.

Belongs to the neurotoxin 14 (magi-1) family. 02 (HWTX-XVIc) subfamily. Expressed by the venom gland.

Its subcellular location is the secreted. In terms of biological role, probable ion channel inhibitor. The chain is U10-theraphotoxin-Hs2a from Cyriopagopus schmidti (Chinese bird spider).